We begin with the raw amino-acid sequence, 253 residues long: Complement C1q subcomponent subunit B (253 aa).

Positions 1–27 are cleaved as a signal peptide; the sequence is MMMKIPWGSIPVLMLLLLLGLIDISQA. A Pyrrolidone carboxylic acid modification is found at Gln28. 4-hydroxyproline is present on residues Pro35, Pro38, Pro41, Pro53, and Pro56. Collagen-like domains follow at residues 37–86 and 60–114; these read IPGI…PGNP and GEKG…GESG. Residues 38 to 115 form a disordered region; the sequence is PGIPGIPGTP…APGPKGESGD (78 aa). A 5-hydroxylysine mark is found at Lys59 and Lys62. Pro65 is subject to 4-hydroxyproline. The span at 70–79 shows a compositional bias: basic and acidic residues; it reads DHGEFGEKGD. Position 77 is a 5-hydroxylysine (Lys77). A compositionally biased stretch (low complexity) spans 80–92; it reads PGIPGNPGKVGPK. 4-hydroxyproline occurs at positions 83 and 86. 2 positions are modified to 5-hydroxylysine: Lys92 and Lys98. The segment covering 96–105 has biased composition (gly residues); sequence GPKGGPGAPG. 4-hydroxyproline occurs at positions 101, 104, and 107. 5-hydroxylysine is present on Lys110. One can recognise a C1q domain in the interval 117-253; sequence KATQKIAFSA…GFLLFPDMEA (137 aa). An intrachain disulfide couples Cys181 to Cys198. The Ca(2+) site is built by Asp199, Tyr200, and Gln206.

As to quaternary structure, core component of the complement C1 complex, a calcium-dependent complex composed of 1 molecule of the C1Q subcomplex, 2 molecules of C1R and 2 molecules of C1S. The C1Q subcomplex is composed 18 subunits: 3 chains of C1QA, C1QB, and C1QC trimerize to form 6 collagen-like triple helices connected to six globular ligand-recognition modules (C1q domain). In terms of processing, hydroxylated on lysine and proline residues. Hydroxylated lysine residues can be glycosylated. Human C1Q contains up to 68.3 hydroxylysine-galactosylglucose residues and up to 2.5 hydroxylysine-galactose per molecule. Total percentage hydroxylysine residues glycosylated is 86.4%.

It is found in the secreted. Its subcellular location is the cell surface. Its activity is regulated as follows. The C1Q subcomplex is inhibited by sulfated molecules, such as triterpenoid sulfates, heparan sulfate, or chondroitin sulfates. Its function is as follows. Core component of the complement C1 complex, a multiprotein complex that initiates the classical pathway of the complement system, a cascade of proteins that leads to phagocytosis and breakdown of pathogens and signaling that strengthens the adaptive immune system. The classical complement pathway is initiated by the C1Q subcomplex of the C1 complex, which specifically binds IgG or IgM immunoglobulins complexed with antigens, forming antigen-antibody complexes on the surface of pathogens: C1QA, together with C1QB and C1QC, specifically recognizes and binds the Fc regions of IgG or IgM via its C1q domain. Immunoglobulin-binding activates the proenzyme C1R, which cleaves C1S, initiating the proteolytic cascade of the complement system. The C1Q subcomplex is activated by a hexamer of IgG complexed with antigens, while it is activated by a pentameric IgM. The C1Q subcomplex also recognizes and binds phosphatidylserine exposed on the surface of cells undergoing programmed cell death, possibly promoting activation of the complement system. This is Complement C1q subcomponent subunit B from Homo sapiens (Human).